The sequence spans 129 residues: Glycine cleavage system H protein (129 aa).

Positions 24-106 (IAVIGITAYA…YGDGWLIKVR (83 aa)) constitute a Lipoyl-binding domain. Lys65 carries the N6-lipoyllysine modification.

It belongs to the GcvH family. In terms of assembly, the glycine cleavage system is composed of four proteins: P, T, L and H. It depends on (R)-lipoate as a cofactor.

Its function is as follows. The glycine cleavage system catalyzes the degradation of glycine. The H protein shuttles the methylamine group of glycine from the P protein to the T protein. This Synechococcus sp. (strain JA-2-3B'a(2-13)) (Cyanobacteria bacterium Yellowstone B-Prime) protein is Glycine cleavage system H protein.